Here is a 206-residue protein sequence, read N- to C-terminus: Ribosomal RNA small subunit methyltransferase G (206 aa).

Residues G74, L79, 125–126 (VE), and R140 each bind S-adenosyl-L-methionine.

It belongs to the methyltransferase superfamily. RNA methyltransferase RsmG family.

The protein localises to the cytoplasm. The catalysed reaction is guanosine(527) in 16S rRNA + S-adenosyl-L-methionine = N(7)-methylguanosine(527) in 16S rRNA + S-adenosyl-L-homocysteine. Its function is as follows. Specifically methylates the N7 position of guanine in position 527 of 16S rRNA. This is Ribosomal RNA small subunit methyltransferase G from Shewanella oneidensis (strain ATCC 700550 / JCM 31522 / CIP 106686 / LMG 19005 / NCIMB 14063 / MR-1).